The chain runs to 471 residues: Acetylcholinesterase collagenic tail peptide (471 aa).

A signal peptide spans 1 to 30 (MLGILLQKATATLASGLNSSRAGMFPIALG). The segment at 70 to 86 (CCLLTPPPPPMFPPPFF) is PRAD. 2 consecutive Collagen-like domains span residues 118–282 (GPPG…SGLP) and 293–307 (GPKGERGLPGPVGRC). Disordered regions lie at residues 140-205 (EIGE…GEKG) and 237-267 (KGVSGAPGHRGPVGRPGKRGKTGLKGDIGPP). Low complexity-rich tracts occupy residues 155–164 (VRGPRGMPGS) and 242–251 (APGHRGPVGR). Repeat copies occupy residues 388–413 (FCGDEIVQVENGEECDDGNRIVTDSC) and 420–443 (YCGDGYLQSGLEECDGKDFGYHTC). Positions 388-443 (FCGDEIVQVENGEECDDGNRIVTDSCINCKQAYCGDGYLQSGLEECDGKDFGYHTC) are 2 X 26 AA approximate repeats.

This sequence belongs to the COLQ family. The asymmetric form of AChE is a disulfide-bonded oligomer composed of a collagenic subunit (Q) and a variable number of asymmetric (T) catalytic subunits. The N-terminal of the collagenic subunit (Q) associates with the C-terminal of the catalytic subunit (T). In terms of tissue distribution, expressed in electric organs but not in muscle.

The protein resides in the synapse. In terms of biological role, anchors the catalytic subunits of asymmetric AChE to the synaptic basal lamina. This Torpedo marmorata (Marbled electric ray) protein is Acetylcholinesterase collagenic tail peptide.